We begin with the raw amino-acid sequence, 299 residues long: Acetaldehyde dehydrogenase (299 aa).

11 to 14 (SGNI) serves as a coordination point for NAD(+). The Acyl-thioester intermediate role is filled by cysteine 126. Residues 157–165 (SAGPGTRAN) and asparagine 267 contribute to the NAD(+) site.

This sequence belongs to the acetaldehyde dehydrogenase family.

It carries out the reaction acetaldehyde + NAD(+) + CoA = acetyl-CoA + NADH + H(+). The sequence is that of Acetaldehyde dehydrogenase from Bacillus thuringiensis (strain Al Hakam).